Here is an 855-residue protein sequence, read N- to C-terminus: Beclin-1-like protein B (855 aa).

Disordered regions lie at residues 92-212 (FGKR…GSLS), 236-271 (LVAD…ESNN), 294-380 (ATIP…QKPR), and 407-475 (VDGG…QQQP). Composition is skewed to low complexity over residues 99 to 123 (TQSN…SLSL) and 131 to 143 (QQQQ…QQQT). Residues 144–156 (FNDQSKLTATTPT) show a composition bias toward polar residues. The segment covering 177–200 (HSNNSSNGSDHGGNVNTTGVSPSS) has biased composition (low complexity). The segment covering 294–348 (ATIPTTTTTSTPTTPSTVGGTTPSPPSSSSSSSSSSSVITSPISRISPSNITSPS) has biased composition (low complexity). Composition is skewed to polar residues over residues 368-377 (LNISQVSSPQ) and 413-445 (SGTE…TTPP). Over residues 446–474 (LLSNSMNNSTNNLQSLQQQQQQQQQQQQQ) the composition is skewed to low complexity. Residues 538–595 (EKGKTEEDLEELGKEMTLLCEEEEQLRLMIENTHQERKEVEQLTLQLQDRIATLKSLE) adopt a coiled-coil conformation. The segment at 826-855 (LNNNQNNNNINNNNNNNINNNNNNNVNKRN) is disordered.

This sequence belongs to the beclin family.

The protein localises to the endosome membrane. Involved in autophagy. May be required to recruit the atg8-phosphatidylinositol conjugate and the atg12-atg5 conjugate to the pre-autophagosomal structure. The chain is Beclin-1-like protein B (atg6B) from Dictyostelium discoideum (Social amoeba).